Reading from the N-terminus, the 196-residue chain is DnaA initiator-associating protein DiaA (196 aa).

One can recognise an SIS domain in the interval 34–196 (LVQSLLNGNK…DNTLFPHQAD (163 aa)).

This sequence belongs to the SIS family. DiaA subfamily. As to quaternary structure, homotetramer; dimer of dimers.

Required for the timely initiation of chromosomal replication via direct interactions with the DnaA initiator protein. This is DnaA initiator-associating protein DiaA from Edwardsiella ictaluri (strain 93-146).